The primary structure comprises 103 residues: Large ribosomal subunit protein bL21 (103 aa).

Belongs to the bacterial ribosomal protein bL21 family. In terms of assembly, part of the 50S ribosomal subunit. Contacts protein L20.

Its function is as follows. This protein binds to 23S rRNA in the presence of protein L20. The sequence is that of Large ribosomal subunit protein bL21 from Clostridium kluyveri (strain NBRC 12016).